We begin with the raw amino-acid sequence, 784 residues long: ent-copalyl diphosphate synthase 2, chloroplastic (784 aa).

A chloroplast-targeting transit peptide spans 1-57 (MSMTLFASVTRPGLPGPTALRFPETRHLFHSVTAFAASFSPSKSSVGSSQCNATTPP). Substrate is bound at residue lysine 242. Residues aspartate 379 and aspartate 381 each coordinate Mg(2+). The DXDD motif signature appears at 379–382 (DIDD). Position 466 (lysine 466) interacts with substrate.

It belongs to the terpene synthase family. It depends on Mg(2+) as a cofactor. As to expression, present in both leaves and flowers.

The protein resides in the plastid. It localises to the chloroplast. Its pathway is plant hormone biosynthesis; gibberellin biosynthesis. It participates in secondary metabolite biosynthesis; terpenoid biosynthesis. In terms of biological role, involved in the biosynthesis of labdane-type diterpenoid including marrubiin and other labdane-related furanoid diterpenoids with potential applications as anti-diabetics, analgesics or vasorelaxants. May be involved in the conversion of geranylgeranyl diphosphate (GGPP) to ent-copalyl diphosphate (ent-CPP) and 8-hydroxycopalyl diphosphate (LPP, labda-13-en-8-ol diphosphate). This chain is ent-copalyl diphosphate synthase 2, chloroplastic, found in Marrubium vulgare (White horehound).